We begin with the raw amino-acid sequence, 338 residues long: Ketol-acid reductoisomerase (NADP(+)) (338 aa).

Residues 1–181 (MNIYYDKDCD…GGGRAGIIET (181 aa)) form the KARI N-terminal Rossmann domain. NADP(+) is bound by residues 24–27 (YGSQ), R47, S50, S52, and 82–85 (DEHQ). H107 is an active-site residue. NADP(+) is bound at residue G133. The KARI C-terminal knotted domain maps to 182 to 327 (AFREETETDL…ERLRSMMPWI (146 aa)). The Mg(2+) site is built by D190, E194, E226, and E230. S251 is a binding site for substrate.

The protein belongs to the ketol-acid reductoisomerase family. Mg(2+) serves as cofactor.

The enzyme catalyses (2R)-2,3-dihydroxy-3-methylbutanoate + NADP(+) = (2S)-2-acetolactate + NADPH + H(+). The catalysed reaction is (2R,3R)-2,3-dihydroxy-3-methylpentanoate + NADP(+) = (S)-2-ethyl-2-hydroxy-3-oxobutanoate + NADPH + H(+). It participates in amino-acid biosynthesis; L-isoleucine biosynthesis; L-isoleucine from 2-oxobutanoate: step 2/4. Its pathway is amino-acid biosynthesis; L-valine biosynthesis; L-valine from pyruvate: step 2/4. Its function is as follows. Involved in the biosynthesis of branched-chain amino acids (BCAA). Catalyzes an alkyl-migration followed by a ketol-acid reduction of (S)-2-acetolactate (S2AL) to yield (R)-2,3-dihydroxy-isovalerate. In the isomerase reaction, S2AL is rearranged via a Mg-dependent methyl migration to produce 3-hydroxy-3-methyl-2-ketobutyrate (HMKB). In the reductase reaction, this 2-ketoacid undergoes a metal-dependent reduction by NADPH to yield (R)-2,3-dihydroxy-isovalerate. This Nitrosococcus oceani (strain ATCC 19707 / BCRC 17464 / JCM 30415 / NCIMB 11848 / C-107) protein is Ketol-acid reductoisomerase (NADP(+)).